The sequence spans 124 residues: Fluoride-specific ion channel FluC (124 aa).

4 helical membrane-spanning segments follow: residues 5–25 (VYIA…SGFV), 32–52 (SFPY…GLIM), 67–87 (FAIT…SFET), and 96–116 (LLIA…CTWI). Gly75 and Thr78 together coordinate Na(+).

Belongs to the fluoride channel Fluc/FEX (TC 1.A.43) family.

Its subcellular location is the cell inner membrane. It catalyses the reaction fluoride(in) = fluoride(out). With respect to regulation, na(+) is not transported, but it plays an essential structural role and its presence is essential for fluoride channel function. Fluoride-specific ion channel. Important for reducing fluoride concentration in the cell, thus reducing its toxicity. The polypeptide is Fluoride-specific ion channel FluC (Citrifermentans bemidjiense (strain ATCC BAA-1014 / DSM 16622 / JCM 12645 / Bem) (Geobacter bemidjiensis)).